Consider the following 90-residue polypeptide: Acylphosphatase (90 aa).

Residues 3-90 (QRQFTVYGCV…RVFSDFTIER (88 aa)) form the Acylphosphatase-like domain. Residues Arg-18 and Asn-36 contribute to the active site.

This sequence belongs to the acylphosphatase family.

The catalysed reaction is an acyl phosphate + H2O = a carboxylate + phosphate + H(+). The sequence is that of Acylphosphatase (acyP) from Actinobacillus succinogenes (strain ATCC 55618 / DSM 22257 / CCUG 43843 / 130Z).